A 701-amino-acid chain; its full sequence is Elongation factor G 2 (701 aa).

Residues 8–290 (ERYRNIGISA…AVIDYLPSPA (283 aa)) enclose the tr-type G domain. Residues 17–24 (AHIDAGKT), 88–92 (DTPGH), and 142–145 (NKMD) each bind GTP.

Belongs to the TRAFAC class translation factor GTPase superfamily. Classic translation factor GTPase family. EF-G/EF-2 subfamily.

It localises to the cytoplasm. Functionally, catalyzes the GTP-dependent ribosomal translocation step during translation elongation. During this step, the ribosome changes from the pre-translocational (PRE) to the post-translocational (POST) state as the newly formed A-site-bound peptidyl-tRNA and P-site-bound deacylated tRNA move to the P and E sites, respectively. Catalyzes the coordinated movement of the two tRNA molecules, the mRNA and conformational changes in the ribosome. In Cupriavidus pinatubonensis (strain JMP 134 / LMG 1197) (Cupriavidus necator (strain JMP 134)), this protein is Elongation factor G 2.